We begin with the raw amino-acid sequence, 152 residues long: Immunity protein YobK (152 aa).

As to quaternary structure, interacts with cognate toxin YobL but not with non-cognate putative toxin YeeF. The interaction inhibits the toxic activity of YobL.

The protein resides in the cytoplasm. In terms of biological role, immunity component of one of 6 LXG toxin-immunity modules in this strain. They promote kin selection, mediate competition in biofilms, and drive spatial segregation of different strains, indicating that LXG toxins may help avoid warfare between strains in biofilms. Mediates intercellular competition during biofilm formation; disruption of the operon disadvantages the bacteria, but overexpression of the cognate immunity protein restores growth in competition with wild-type. In situ neutralizes the toxic effect of cognate toxin YobL. Neutralizes the toxic activity of cognate toxin YobL upon expression in E.coli. Does not have immunity protein activity on other LXG toxins. This chain is Immunity protein YobK (yobK), found in Bacillus subtilis (strain 168).